A 45-amino-acid chain; its full sequence is Putative metallothionein-like protein 1B (45 aa).

This sequence belongs to the metallothionein superfamily. Type 15 family.

Functionally, metallothioneins have a high content of cysteine residues that bind various heavy metals. Confers tolerance to cadmium (Cd) and plays a role in Cd and zinc (Zn) homeostasis. This is Putative metallothionein-like protein 1B (MT1B) from Arabidopsis thaliana (Mouse-ear cress).